A 559-amino-acid chain; its full sequence is YTH domain-containing family protein 1 (559 aa).

Residues M1–P49 form a disordered region. Position 2 is an N-acetylserine (S2). The span at H24 to D33 shows a compositional bias: basic and acidic residues. Phosphoserine is present on S182. A disordered region spans residues S239–H365. Low complexity-rich tracts occupy residues P279–L305 and Q314–P326. Polar residues predominate over residues G343–S361. One can recognise a YTH domain in the interval G389 to I523. RNA is bound by residues K395 to Y397, D401, W411 to C412, N441, W465, and W470.

It belongs to the YTHDF family. YTHDF1 subfamily. As to quaternary structure, interacts with CNOT1; promoting recruitment of the CCR4-NOT complex. Interacts with ribosomes. Interacts with eIF3 (EIF3A or EIF3B). Interacts with YTHDF3. Ubiquitinated by the CUL7-FBXW8 E3 ligase complex leading to degradation. Deubiquitinated and stabilized by USP5 by removing 'Lys-11'-linked polyubiquitination. In brain, preferentially expressed in the hippocampus.

It is found in the cytoplasm. The protein resides in the P-body. Its subcellular location is the stress granule. In terms of biological role, specifically recognizes and binds N6-methyladenosine (m6A)-containing mRNAs, and regulates their stability. M6A is a modification present at internal sites of mRNAs and some non-coding RNAs and plays a role in mRNA stability and processing. Acts as a regulator of mRNA stability by promoting degradation of m6A-containing mRNAs via interaction with the CCR4-NOT complex. The YTHDF paralogs (YTHDF1, YTHDF2 and YTHDF3) share m6A-containing mRNAs targets and act redundantly to mediate mRNA degradation and cellular differentiation. Required to facilitate learning and memory formation in the hippocampus by binding to m6A-containing neuronal mRNAs. Acts as a regulator of axon guidance by binding to m6A-containing ROBO3 transcripts. Acts as a negative regulator of antigen cross-presentation in myeloid dendritic cells. In the context of tumorigenesis, negative regulation of antigen cross-presentation limits the anti-tumor response by reducing efficiency of tumor-antigen cross-presentation. Promotes formation of phase-separated membraneless compartments, such as P-bodies or stress granules, by undergoing liquid-liquid phase separation upon binding to mRNAs containing multiple m6A-modified residues: polymethylated mRNAs act as a multivalent scaffold for the binding of YTHDF proteins, juxtaposing their disordered regions and thereby leading to phase separation. The resulting mRNA-YTHDF complexes then partition into different endogenous phase-separated membraneless compartments, such as P-bodies, stress granules or neuronal RNA granules. The protein is YTH domain-containing family protein 1 of Mus musculus (Mouse).